The following is a 364-amino-acid chain: Phosphoserine aminotransferase (364 aa).

Arg-41 lines the L-glutamate pocket. Pyridoxal 5'-phosphate contacts are provided by residues 75-76 (AS), Trp-100, Thr-155, Asp-175, and Gln-198. Position 199 is an N6-(pyridoxal phosphate)lysine (Lys-199). A pyridoxal 5'-phosphate-binding site is contributed by 239–240 (NT).

This sequence belongs to the class-V pyridoxal-phosphate-dependent aminotransferase family. SerC subfamily. Homodimer. It depends on pyridoxal 5'-phosphate as a cofactor.

It localises to the cytoplasm. It catalyses the reaction O-phospho-L-serine + 2-oxoglutarate = 3-phosphooxypyruvate + L-glutamate. The catalysed reaction is 4-(phosphooxy)-L-threonine + 2-oxoglutarate = (R)-3-hydroxy-2-oxo-4-phosphooxybutanoate + L-glutamate. It functions in the pathway amino-acid biosynthesis; L-serine biosynthesis; L-serine from 3-phospho-D-glycerate: step 2/3. Catalyzes the reversible conversion of 3-phosphohydroxypyruvate to phosphoserine and of 3-hydroxy-2-oxo-4-phosphonooxybutanoate to phosphohydroxythreonine. This Streptococcus uberis (strain ATCC BAA-854 / 0140J) protein is Phosphoserine aminotransferase.